A 245-amino-acid chain; its full sequence is tRNA1(Val) (adenine(37)-N6)-methyltransferase (245 aa).

Belongs to the methyltransferase superfamily. tRNA (adenine-N(6)-)-methyltransferase family.

The protein localises to the cytoplasm. It catalyses the reaction adenosine(37) in tRNA1(Val) + S-adenosyl-L-methionine = N(6)-methyladenosine(37) in tRNA1(Val) + S-adenosyl-L-homocysteine + H(+). Its function is as follows. Specifically methylates the adenine in position 37 of tRNA(1)(Val) (anticodon cmo5UAC). The chain is tRNA1(Val) (adenine(37)-N6)-methyltransferase from Escherichia fergusonii (strain ATCC 35469 / DSM 13698 / CCUG 18766 / IAM 14443 / JCM 21226 / LMG 7866 / NBRC 102419 / NCTC 12128 / CDC 0568-73).